A 359-amino-acid chain; its full sequence is 3-dehydroquinate synthase (359 aa).

Residues 70–75, 105–109, 129–130, K142, K151, and 169–172 each bind NAD(+); these read DGEQYK, GVIGD, TT, and FYKT. Positions 184, 247, and 264 each coordinate Zn(2+).

Belongs to the sugar phosphate cyclases superfamily. Dehydroquinate synthase family. Co(2+) is required as a cofactor. Requires Zn(2+) as cofactor. NAD(+) serves as cofactor.

It is found in the cytoplasm. It carries out the reaction 7-phospho-2-dehydro-3-deoxy-D-arabino-heptonate = 3-dehydroquinate + phosphate. The protein operates within metabolic intermediate biosynthesis; chorismate biosynthesis; chorismate from D-erythrose 4-phosphate and phosphoenolpyruvate: step 2/7. Functionally, catalyzes the conversion of 3-deoxy-D-arabino-heptulosonate 7-phosphate (DAHP) to dehydroquinate (DHQ). The sequence is that of 3-dehydroquinate synthase from Francisella tularensis subsp. tularensis (strain WY96-3418).